A 337-amino-acid chain; its full sequence is UDP-glucose 4-epimerase (337 aa).

Residues 11 to 12 (YI), 31 to 36 (DNLSNA), 58 to 59 (DL), 80 to 84 (FAGLK), N99, S124, Y149, K153, and F178 each bind NAD(+). S124 and Y149 together coordinate substrate. Y149 functions as the Proton acceptor in the catalytic mechanism. Residues N179, 199-200 (NL), 216-218 (GIF), R231, and 292-295 (RDGD) contribute to the substrate site.

This sequence belongs to the NAD(P)-dependent epimerase/dehydratase family. Homodimer. Requires NAD(+) as cofactor.

It catalyses the reaction UDP-alpha-D-glucose = UDP-alpha-D-galactose. It participates in carbohydrate metabolism; galactose metabolism. Its function is as follows. Involved in the metabolism of galactose. Catalyzes the conversion of UDP-galactose (UDP-Gal) to UDP-glucose (UDP-Glc) through a mechanism involving the transient reduction of NAD. In Erwinia amylovora (Fire blight bacteria), this protein is UDP-glucose 4-epimerase (galE).